The sequence spans 290 residues: Dihydroorotate dehydrogenase B (NAD(+)), catalytic subunit (290 aa).

Residues serine 17 and lysine 42 to threonine 43 contribute to the FMN site. Substrate contacts are provided by residues lysine 42, asparagine 67–leucine 71, and asparagine 117. Residue asparagine 117 coordinates FMN. Catalysis depends on serine 120, which acts as the Nucleophile. FMN-binding residues include lysine 152 and isoleucine 177. Asparagine 178 to threonine 179 serves as a coordination point for substrate. Residues glycine 203, glycine 229–glycine 230, and glycine 251–threonine 252 contribute to the FMN site.

Belongs to the dihydroorotate dehydrogenase family. Type 1 subfamily. In terms of assembly, heterotetramer of 2 PyrK and 2 PyrD type B subunits. The cofactor is FMN.

The protein resides in the cytoplasm. The enzyme catalyses (S)-dihydroorotate + NAD(+) = orotate + NADH + H(+). The protein operates within pyrimidine metabolism; UMP biosynthesis via de novo pathway; orotate from (S)-dihydroorotate (NAD(+) route): step 1/1. In terms of biological role, catalyzes the conversion of dihydroorotate to orotate with NAD(+) as electron acceptor. The polypeptide is Dihydroorotate dehydrogenase B (NAD(+)), catalytic subunit (pyrD) (Saccharolobus solfataricus (strain ATCC 35092 / DSM 1617 / JCM 11322 / P2) (Sulfolobus solfataricus)).